The primary structure comprises 122 residues: Diacylglycerol kinase (122 aa).

ATP is bound by residues arginine 10 and tyrosine 17. Substrate-binding positions include arginine 10, 14-19 (AAGYSW), and 23-26 (RAAW). Glutamate 29 contacts ATP. Glutamate 29 serves as a coordination point for a divalent metal cation. Residues 31–35 (AFRQE), 48–51 (WLDV), arginine 56, and glutamate 70 contribute to the substrate site. The chain crosses the membrane as a helical span at residues 35–55 (EGVAVLLAVVIACWLDVDAIT). Residues 57 to 77 (VLLISSVMLVMIVEILNSAIE) form a helical membrane-spanning segment. The Proton acceptor role is filled by glutamate 70. Residues glutamate 77, 86–88 (EYH), and 95–96 (KD) each bind ATP. An a divalent metal cation-binding site is contributed by glutamate 77. The chain crosses the membrane as a helical span at residues 98-118 (GSAAVLIAIIVAVITWCILLW). Substrate contacts are provided by residues serine 99 and 113 to 118 (WCILLW).

Belongs to the bacterial diacylglycerol kinase family. It depends on Mg(2+) as a cofactor.

It localises to the cell inner membrane. The enzyme catalyses a 1,2-diacyl-sn-glycerol + ATP = a 1,2-diacyl-sn-glycero-3-phosphate + ADP + H(+). Functionally, catalyzes the ATP-dependent phosphorylation of sn-l,2-diacylglycerol (DAG) to phosphatidic acid. Involved in the recycling of diacylglycerol produced as a by-product during membrane-derived oligosaccharide (MDO) biosynthesis. The sequence is that of Diacylglycerol kinase (dgkA) from Shigella flexneri.